Reading from the N-terminus, the 382-residue chain is Galactokinase (382 aa).

34 to 37 (EHTD) provides a ligand contact to substrate. 124–130 (GAGLSSS) provides a ligand contact to ATP. Residues Ser130 and Glu162 each coordinate Mg(2+). Catalysis depends on Asp174, which acts as the Proton acceptor. Tyr223 lines the substrate pocket.

The protein belongs to the GHMP kinase family. GalK subfamily.

The protein resides in the cytoplasm. It carries out the reaction alpha-D-galactose + ATP = alpha-D-galactose 1-phosphate + ADP + H(+). Its pathway is carbohydrate metabolism; galactose metabolism. Functionally, catalyzes the transfer of the gamma-phosphate of ATP to D-galactose to form alpha-D-galactose-1-phosphate (Gal-1-P). The chain is Galactokinase from Salmonella paratyphi C (strain RKS4594).